A 278-amino-acid polypeptide reads, in one-letter code: Insulin-like growth factor-binding protein-like 1 (278 aa).

The N-terminal stretch at 1–25 (MPRLSLLLPLLLLLLLPLLPPLSPS) is a signal peptide. Residues 34-109 (RRPKCGPCRP…PEGTGLCVCA (76 aa)) enclose the IGFBP N-terminal domain. 7 disulfide bridges follow: Cys-38-Cys-63, Cys-41-Cys-65, Cys-46-Cys-66, Cys-52-Cys-69, Cys-77-Cys-91, Cys-85-Cys-106, and Cys-115-Cys-151. A Kazal-like domain is found at 95–153 (AAGAAPEGTGLCVCAQRGTVCGSDGRSYPSVCALRLRARHTPRAHPGHLHKARDGPCEF). The region spanning 155-259 (PVVVVPPRSV…GEAESHSTVT (105 aa)) is the Ig-like C2-type domain. An N-linked (GlcNAc...) asparagine glycan is attached at Asn-166. Cys-176 and Cys-243 are oxidised to a cystine.

In terms of tissue distribution, expressed at the highest level in both brain and testis, with lower levels in the prostate, bladder and lung.

It is found in the secreted. In terms of biological role, IGF-binding proteins prolong the half-life of IGFs and have been shown to either inhibit or stimulate the growth promoting effects of the IGFs in cell culture. They alter the interaction of IGFs with their cell surface receptors. May be a putative tumor suppressor protein. The chain is Insulin-like growth factor-binding protein-like 1 (IGFBPL1) from Homo sapiens (Human).